Consider the following 66-residue polypeptide: DNA gyrase inhibitor YacG (66 aa).

4 residues coordinate Zn(2+): Cys-9, Cys-12, Cys-28, and Cys-32. The tract at residues 45 to 66 is disordered; the sequence is HKIAGSQESEDELYSGDLEPRH.

This sequence belongs to the DNA gyrase inhibitor YacG family. In terms of assembly, interacts with GyrB. Zn(2+) is required as a cofactor.

Inhibits all the catalytic activities of DNA gyrase by preventing its interaction with DNA. Acts by binding directly to the C-terminal domain of GyrB, which probably disrupts DNA binding by the gyrase. In Pseudomonas putida (strain W619), this protein is DNA gyrase inhibitor YacG.